A 302-amino-acid chain; its full sequence is Succinate--CoA ligase [ADP-forming] subunit alpha (302 aa).

Residues 17–20 (TGST), lysine 43, and 96–98 (ITE) each bind CoA. Tyrosine 159 serves as a coordination point for substrate. The active-site Tele-phosphohistidine intermediate is the histidine 247.

Belongs to the succinate/malate CoA ligase alpha subunit family. Heterotetramer of two alpha and two beta subunits.

It carries out the reaction succinate + ATP + CoA = succinyl-CoA + ADP + phosphate. The enzyme catalyses GTP + succinate + CoA = succinyl-CoA + GDP + phosphate. It participates in carbohydrate metabolism; tricarboxylic acid cycle; succinate from succinyl-CoA (ligase route): step 1/1. Functionally, succinyl-CoA synthetase functions in the citric acid cycle (TCA), coupling the hydrolysis of succinyl-CoA to the synthesis of either ATP or GTP and thus represents the only step of substrate-level phosphorylation in the TCA. The alpha subunit of the enzyme binds the substrates coenzyme A and phosphate, while succinate binding and nucleotide specificity is provided by the beta subunit. In Staphylococcus aureus (strain MRSA252), this protein is Succinate--CoA ligase [ADP-forming] subunit alpha.